Here is a 498-residue protein sequence, read N- to C-terminus: Cytochrome P450 6B1 (498 aa).

Cysteine 443 is a heme binding site.

The protein belongs to the cytochrome P450 family. Heme is required as a cofactor. In terms of tissue distribution, midgut microsome.

It localises to the endoplasmic reticulum membrane. The protein localises to the microsome membrane. The catalysed reaction is an organic molecule + reduced [NADPH--hemoprotein reductase] + O2 = an alcohol + oxidized [NADPH--hemoprotein reductase] + H2O + H(+). Enables the insect to feed on furanocoumarin-producing plants and evolved as an adaptation for detoxification of xanthotoxin and other furanocoumarins. The protein is Cytochrome P450 6B1 (CYP6B1) of Papilio polyxenes (Black swallowtail butterfly).